Consider the following 212-residue polypeptide: Nodulation protein NolU (212 aa).

Regulates cultivar-specific nodulation of soybean. In Rhizobium fredii (Sinorhizobium fredii), this protein is Nodulation protein NolU (nolU).